A 212-amino-acid polypeptide reads, in one-letter code: Uracil phosphoribosyltransferase (212 aa).

5-phospho-alpha-D-ribose 1-diphosphate-binding positions include R78, R103, and D130 to S138. Uracil-binding positions include I193 and G198–A200. D199 provides a ligand contact to 5-phospho-alpha-D-ribose 1-diphosphate.

Belongs to the UPRTase family. Mg(2+) is required as a cofactor.

The catalysed reaction is UMP + diphosphate = 5-phospho-alpha-D-ribose 1-diphosphate + uracil. It functions in the pathway pyrimidine metabolism; UMP biosynthesis via salvage pathway; UMP from uracil: step 1/1. With respect to regulation, allosterically activated by GTP. In terms of biological role, catalyzes the conversion of uracil and 5-phospho-alpha-D-ribose 1-diphosphate (PRPP) to UMP and diphosphate. The chain is Uracil phosphoribosyltransferase from Ectopseudomonas mendocina (strain ymp) (Pseudomonas mendocina).